The sequence spans 193 residues: Protein B4 (193 aa).

The next 3 membrane-spanning stretches (helical) occupy residues 15–35, 36–56, and 160–180; these read FFVCIFLCVFFCVCIFLCVFF, CVYFFVCVFFCVCFFVCVFFV, and LSLCGSAFCLSFSLARAIVFS.

Its subcellular location is the host membrane. The sequence is that of Protein B4 (B4) from Homo sapiens (Human).